The primary structure comprises 317 residues: Beta-ketoacyl-[acyl-carrier-protein] synthase III (317 aa).

Active-site residues include cysteine 112 and histidine 244. Residues 245 to 249 are ACP-binding; sequence QANVR. Residue asparagine 274 is part of the active site.

It belongs to the thiolase-like superfamily. FabH family. As to quaternary structure, homodimer.

It is found in the cytoplasm. It carries out the reaction malonyl-[ACP] + acetyl-CoA + H(+) = 3-oxobutanoyl-[ACP] + CO2 + CoA. It functions in the pathway lipid metabolism; fatty acid biosynthesis. In terms of biological role, catalyzes the condensation reaction of fatty acid synthesis by the addition to an acyl acceptor of two carbons from malonyl-ACP. Catalyzes the first condensation reaction which initiates fatty acid synthesis and may therefore play a role in governing the total rate of fatty acid production. Possesses both acetoacetyl-ACP synthase and acetyl transacylase activities. Its substrate specificity determines the biosynthesis of branched-chain and/or straight-chain of fatty acids. This chain is Beta-ketoacyl-[acyl-carrier-protein] synthase III, found in Rickettsia bellii (strain OSU 85-389).